The primary structure comprises 376 residues: UPF0754 membrane protein BLi01057/BL02871 (376 aa).

Transmembrane regions (helical) follow at residues 1–21 (MYVF…GAVT) and 356–376 (YLGG…VILI).

The protein belongs to the UPF0754 family.

It is found in the cell membrane. This chain is UPF0754 membrane protein BLi01057/BL02871, found in Bacillus licheniformis (strain ATCC 14580 / DSM 13 / JCM 2505 / CCUG 7422 / NBRC 12200 / NCIMB 9375 / NCTC 10341 / NRRL NRS-1264 / Gibson 46).